The sequence spans 428 residues: Adenylosuccinate synthetase (428 aa).

GTP-binding positions include Gly12–Lys18 and Gly40–Thr42. Asp13 (proton acceptor) is an active-site residue. Mg(2+) is bound by residues Asp13 and Gly40. IMP-binding positions include Asp13–Lys16, Asn38–His41, Thr128, Arg142, Gln223, Thr238, and Arg302. Residue His41 is the Proton donor of the active site. Thr298 to Arg304 is a binding site for substrate. GTP-binding positions include Arg304, Lys330–Asp332, and Ser412–Gly414.

Belongs to the adenylosuccinate synthetase family. In terms of assembly, homodimer. It depends on Mg(2+) as a cofactor.

Its subcellular location is the cytoplasm. It catalyses the reaction IMP + L-aspartate + GTP = N(6)-(1,2-dicarboxyethyl)-AMP + GDP + phosphate + 2 H(+). It functions in the pathway purine metabolism; AMP biosynthesis via de novo pathway; AMP from IMP: step 1/2. In terms of biological role, plays an important role in the de novo pathway of purine nucleotide biosynthesis. Catalyzes the first committed step in the biosynthesis of AMP from IMP. This chain is Adenylosuccinate synthetase, found in Brevibacillus brevis (strain 47 / JCM 6285 / NBRC 100599).